Here is a 353-residue protein sequence, read N- to C-terminus: Guanine nucleotide-binding protein alpha-1 subunit (353 aa).

Glycine 2 carries the N-myristoyl glycine lipid modification. Residue cysteine 3 is the site of S-palmitoyl cysteine attachment. Residues 32–353 (NEIKMLLLGA…QVNLRDCGLL (322 aa)) enclose the G-alpha domain. A G1 motif region spans residues 35 to 48 (KMLLLGAGESGKST). GTP is bound by residues glutamate 43, serine 44, glycine 45, lysine 46, serine 47, threonine 48, aspartate 150, leucine 175, threonine 181, glycine 203, asparagine 269, lysine 270, aspartate 272, and alanine 325. Serine 47 provides a ligand contact to Mg(2+). Positions 173-181 (DVLRSRVKT) are G2 motif. Mg(2+) is bound at residue threonine 181. The interval 196–205 (YKLFDVGGQR) is G3 motif. Positions 265–272 (ILFLNKID) are G4 motif. The G5 motif stretch occupies residues 323–328 (TCATDT).

This sequence belongs to the G-alpha family. In terms of assembly, g proteins are composed of 3 units; alpha, beta and gamma. The alpha chain contains the guanine nucleotide binding site. Mg(2+) is required as a cofactor.

In terms of biological role, guanine nucleotide-binding proteins (G proteins) are involved as modulators or transducers in various transmembrane signaling systems. In Mycosarcoma maydis (Corn smut fungus), this protein is Guanine nucleotide-binding protein alpha-1 subunit (GPA1).